A 484-amino-acid chain; its full sequence is Glycogen synthase (484 aa).

Lysine 15 contacts ADP-alpha-D-glucose.

Belongs to the glycosyltransferase 1 family. Bacterial/plant glycogen synthase subfamily.

It carries out the reaction [(1-&gt;4)-alpha-D-glucosyl](n) + ADP-alpha-D-glucose = [(1-&gt;4)-alpha-D-glucosyl](n+1) + ADP + H(+). It participates in glycan biosynthesis; glycogen biosynthesis. Functionally, synthesizes alpha-1,4-glucan chains using ADP-glucose. In Syntrophotalea carbinolica (strain DSM 2380 / NBRC 103641 / GraBd1) (Pelobacter carbinolicus), this protein is Glycogen synthase.